Reading from the N-terminus, the 238-residue chain is TATA-box-binding protein (238 aa).

The tract at residues M1 to G58 is disordered. The segment covering E27–D49 has biased composition (basic and acidic residues). 2 consecutive repeat copies span residues L65–I141 and I155–L232.

The protein belongs to the TBP family. Belongs to the TFIID complex together with the TBP-associated factors (TAFs). Binds DNA as monomer.

It is found in the nucleus. General transcription factor that functions at the core of the DNA-binding multiprotein factor TFIID. Binding of TFIID to the TATA box is the initial transcriptional step of the pre-initiation complex (PIC), playing a role in the activation of eukaryotic genes transcribed by RNA polymerase II. The protein is TATA-box-binding protein (TBP1) of Candida albicans (strain SC5314 / ATCC MYA-2876) (Yeast).